A 431-amino-acid chain; its full sequence is Enolase (431 aa).

Q168 lines the (2R)-2-phosphoglycerate pocket. The active-site Proton donor is the E210. Residues D247, E291, and D318 each contribute to the Mg(2+) site. (2R)-2-phosphoglycerate is bound by residues K343, R372, S373, and K394. The active-site Proton acceptor is K343.

The protein belongs to the enolase family. Component of the RNA degradosome, a multiprotein complex involved in RNA processing and mRNA degradation. Requires Mg(2+) as cofactor.

It is found in the cytoplasm. The protein resides in the secreted. Its subcellular location is the cell surface. It carries out the reaction (2R)-2-phosphoglycerate = phosphoenolpyruvate + H2O. It participates in carbohydrate degradation; glycolysis; pyruvate from D-glyceraldehyde 3-phosphate: step 4/5. Catalyzes the reversible conversion of 2-phosphoglycerate (2-PG) into phosphoenolpyruvate (PEP). It is essential for the degradation of carbohydrates via glycolysis. The sequence is that of Enolase from Acinetobacter baumannii (strain SDF).